The sequence spans 512 residues: Maturase K (512 aa).

It belongs to the intron maturase 2 family. MatK subfamily.

It localises to the plastid. The protein resides in the chloroplast. Its function is as follows. Usually encoded in the trnK tRNA gene intron. Probably assists in splicing its own and other chloroplast group II introns. The polypeptide is Maturase K (Lilium longiflorum (Trumpet lily)).